Here is a 545-residue protein sequence, read N- to C-terminus: ATP synthase subunit alpha (545 aa).

An ATP-binding site is contributed by 173 to 180 (GDRQTGKS).

This sequence belongs to the ATPase alpha/beta chains family. In terms of assembly, F-type ATPases have 2 components, CF(1) - the catalytic core - and CF(0) - the membrane proton channel. CF(1) has five subunits: alpha(3), beta(3), gamma(1), delta(1), epsilon(1). CF(0) has three main subunits: a(1), b(2) and c(9-12). The alpha and beta chains form an alternating ring which encloses part of the gamma chain. CF(1) is attached to CF(0) by a central stalk formed by the gamma and epsilon chains, while a peripheral stalk is formed by the delta and b chains.

It is found in the cell membrane. The catalysed reaction is ATP + H2O + 4 H(+)(in) = ADP + phosphate + 5 H(+)(out). Its function is as follows. Produces ATP from ADP in the presence of a proton gradient across the membrane. The alpha chain is a regulatory subunit. In Arthrobacter sp. (strain FB24), this protein is ATP synthase subunit alpha.